We begin with the raw amino-acid sequence, 350 residues long: MQLLKQNYKKYILDLNDAQFNRAVKPIIEQDYRINQIIEWIYAKKAVSFESFTNIPKELRNKLDEKFFLRTLKIVKKEKSLIDSTIRYTFRTADKKYFFAVFLPANGKNSVCISSQIGCPIMCAFCSSGKTKLARNLSRGEIIEQILQVENDTKEKISGILFMGMGEPMLNFNNLISVLNSLLSSKEFGIGKRHITVSSVGIVPAVKKLADDNFGVRLALSLHAVDERQRKKLVPDNLGFSIEDILKAGKYYLKKTNSHLTIEYVLVKGINISSADAHKLARLLKRCDLINSDVQVNLIPFNPVTDVQFQRPDKKSINKFKSILKLNGITVNVRQSKGANINAACGQLGY.

Residues 105 to 342 (ANGKNSVCIS…VRQSKGANIN (238 aa)) enclose the Radical SAM core domain. Cysteine 112 and cysteine 345 are joined by a disulfide. [4Fe-4S] cluster is bound by residues cysteine 119, cysteine 123, and cysteine 126. S-adenosyl-L-methionine contacts are provided by residues 166-167 (GE), serine 198, 221-223 (SLH), and asparagine 302. Cysteine 345 acts as the S-methylcysteine intermediate in catalysis.

Belongs to the radical SAM superfamily. RlmN family. [4Fe-4S] cluster serves as cofactor.

Its subcellular location is the cytoplasm. The enzyme catalyses adenosine(2503) in 23S rRNA + 2 reduced [2Fe-2S]-[ferredoxin] + 2 S-adenosyl-L-methionine = 2-methyladenosine(2503) in 23S rRNA + 5'-deoxyadenosine + L-methionine + 2 oxidized [2Fe-2S]-[ferredoxin] + S-adenosyl-L-homocysteine. It catalyses the reaction adenosine(37) in tRNA + 2 reduced [2Fe-2S]-[ferredoxin] + 2 S-adenosyl-L-methionine = 2-methyladenosine(37) in tRNA + 5'-deoxyadenosine + L-methionine + 2 oxidized [2Fe-2S]-[ferredoxin] + S-adenosyl-L-homocysteine. Functionally, specifically methylates position 2 of adenine 2503 in 23S rRNA and position 2 of adenine 37 in tRNAs. This Endomicrobium trichonymphae protein is Probable dual-specificity RNA methyltransferase RlmN.